A 313-amino-acid polypeptide reads, in one-letter code: Pre-mRNA-splicing factor 38A (313 aa).

The N-terminal protein interaction domain stretch occupies residues 1 to 179 (MANRTVKDAN…VLEEAELLDP (179 aa)). Residues 172–201 (EEAELLDPRISALEEDLDEVETSEEEDDED) are a coiled coil. The interval 182–313 (SALEEDLDEV…SHKRSRRGNE (132 aa)) is disordered. Over residues 184–202 (LEEDLDEVETSEEEDDEDE) the composition is skewed to acidic residues. A compositionally biased stretch (basic and acidic residues) spans 203-224 (KPERMQSPEPHRRSYRDMDRPR). Basic residues-rich tracts occupy residues 225–250 (RSPS…RSPS), 260–294 (HRSK…RSHS), and 302–313 (KKSHKRSRRGNE).

This sequence belongs to the PRP38 family. As to quaternary structure, component of the spliceosome B complex.

The protein resides in the nucleus. Its function is as follows. Involved in pre-mRNA splicing as a component of the spliceosome. The protein is Pre-mRNA-splicing factor 38A (prpf38a) of Danio rerio (Zebrafish).